The following is an 806-amino-acid chain: Glycerol-3-phosphate acyltransferase (806 aa).

The HXXXXD motif motif lies at 305 to 310 (CHRSHM).

Belongs to the GPAT/DAPAT family.

It localises to the cell inner membrane. The enzyme catalyses sn-glycerol 3-phosphate + an acyl-CoA = a 1-acyl-sn-glycero-3-phosphate + CoA. Its pathway is phospholipid metabolism; CDP-diacylglycerol biosynthesis; CDP-diacylglycerol from sn-glycerol 3-phosphate: step 1/3. The chain is Glycerol-3-phosphate acyltransferase from Salmonella paratyphi A (strain ATCC 9150 / SARB42).